A 397-amino-acid polypeptide reads, in one-letter code: Probable peptidoglycan glycosyltransferase FtsW (397 aa).

The Cytoplasmic portion of the chain corresponds to 1–18 (MSALTLTASKNTQTMTLD). A helical membrane pass occupies residues 19 to 39 (LPLLGSALALAAIGLIMVTSA). Over 40-58 (SVDFADDANGQALYYMWRH) the chain is Periplasmic. A helical membrane pass occupies residues 59–79 (LTYLLAGVAVGFVILRLPLEW). The Cytoplasmic segment spans residues 80–83 (WHKQ). The helical transmembrane segment at 84 to 104 (SWLLLVVALGFLVAVLIPGIG) threads the bilayer. Topologically, residues 105–112 (RTVNGSTR) are periplasmic. The helical transmembrane segment at 113 to 133 (WISLGVINIQASEIAKVCLAI) threads the bilayer. Over 134–148 (YTASYLVRRLDEVRG) the chain is Cytoplasmic. A helical transmembrane segment spans residues 149–169 (SWWGFAKPLLVLMLVALLLLM). The Periplasmic portion of the chain corresponds to 170–172 (EPD). Residues 173 to 193 (FGALVVTMCAVVGMIFLSGVA) form a helical membrane-spanning segment. The Cytoplasmic segment spans residues 194–196 (LSR). The helical transmembrane segment at 197–217 (FAALLMFCVGSVALLAVSQPY) threads the bilayer. Residues 218-272 (RLKRLTAYTDPWADQFDSGYQLTQALIAFGRGEWSGVGLGNSVQKLFYLPEAHTD) are Periplasmic-facing. The chain crosses the membrane as a helical span at residues 273 to 293 (FVFAIIAEELGLLGSLLIIVL). Residues 294–316 (FGVLLWRGMYVSRVAERAGQLFN) lie on the Cytoplasmic side of the membrane. Residues 317–337 (AYAGYGVTLLLGGQALINLGV) form a helical membrane-spanning segment. Residues 338-348 (NTGLLPTKGLT) are Periplasmic-facing. Residues 349–369 (LPLISYGGSSLIISCLCVAIL) traverse the membrane as a helical segment. Over 370–397 (LRIGSEAVSGEQTEDESPKVKNRGGAQR) the chain is Cytoplasmic.

Belongs to the SEDS family. FtsW subfamily.

The protein resides in the cell inner membrane. The catalysed reaction is [GlcNAc-(1-&gt;4)-Mur2Ac(oyl-L-Ala-gamma-D-Glu-L-Lys-D-Ala-D-Ala)](n)-di-trans,octa-cis-undecaprenyl diphosphate + beta-D-GlcNAc-(1-&gt;4)-Mur2Ac(oyl-L-Ala-gamma-D-Glu-L-Lys-D-Ala-D-Ala)-di-trans,octa-cis-undecaprenyl diphosphate = [GlcNAc-(1-&gt;4)-Mur2Ac(oyl-L-Ala-gamma-D-Glu-L-Lys-D-Ala-D-Ala)](n+1)-di-trans,octa-cis-undecaprenyl diphosphate + di-trans,octa-cis-undecaprenyl diphosphate + H(+). Its pathway is cell wall biogenesis; peptidoglycan biosynthesis. In terms of biological role, peptidoglycan polymerase that is essential for cell division. This is Probable peptidoglycan glycosyltransferase FtsW from Hahella chejuensis (strain KCTC 2396).